Consider the following 365-residue polypeptide: Sulfate/thiosulfate import ATP-binding protein CysA (365 aa).

Residues 3–237 enclose the ABC transporter domain; it reads IEIARIKKSF…PATRFVLEFM (235 aa). 35–42 lines the ATP pocket; that stretch reads GPSGSGKT.

The protein belongs to the ABC transporter superfamily. Sulfate/tungstate importer (TC 3.A.1.6) family. In terms of assembly, the complex is composed of two ATP-binding proteins (CysA), two transmembrane proteins (CysT and CysW) and a solute-binding protein (CysP).

The protein localises to the cell inner membrane. The catalysed reaction is sulfate(out) + ATP + H2O = sulfate(in) + ADP + phosphate + H(+). The enzyme catalyses thiosulfate(out) + ATP + H2O = thiosulfate(in) + ADP + phosphate + H(+). In terms of biological role, part of the ABC transporter complex CysAWTP involved in sulfate/thiosulfate import. Responsible for energy coupling to the transport system. The chain is Sulfate/thiosulfate import ATP-binding protein CysA from Salmonella typhimurium (strain LT2 / SGSC1412 / ATCC 700720).